Here is a 450-residue protein sequence, read N- to C-terminus: Glucose-6-phosphate isomerase (450 aa).

Thr39 bears the Phosphothreonine mark. Catalysis depends on Glu291, which acts as the Proton donor. Residues His312 and Lys426 contribute to the active site.

The protein belongs to the GPI family.

It is found in the cytoplasm. The enzyme catalyses alpha-D-glucose 6-phosphate = beta-D-fructose 6-phosphate. The protein operates within carbohydrate biosynthesis; gluconeogenesis. Its pathway is carbohydrate degradation; glycolysis; D-glyceraldehyde 3-phosphate and glycerone phosphate from D-glucose: step 2/4. Catalyzes the reversible isomerization of glucose-6-phosphate to fructose-6-phosphate. This chain is Glucose-6-phosphate isomerase, found in Bacillus cereus (strain AH187).